The sequence spans 384 residues: Neuropeptide Y receptor type 1 (384 aa).

The Extracellular portion of the chain corresponds to 1–44 (MNSTLFSQVENHSVHSNFSEKNAQLLAFENDDCHLPLAMIFTLA). N2, N11, and N17 each carry an N-linked (GlcNAc...) asparagine glycan. The helical transmembrane segment at 45-65 (LAYGAVIILGVSGNLALIIII) threads the bilayer. The Cytoplasmic portion of the chain corresponds to 66-76 (LKQKEMRNVTN). The chain crosses the membrane as a helical span at residues 77-97 (ILIVNLSFSDLLVAIMCLPFT). Residues 98 to 116 (FVYTLMDHWVFGEAMCKLN) are Extracellular-facing. A disulfide bridge connects residues C113 and C198. Residues 117–137 (PFVQCVSITVSIFSLVLIAVE) traverse the membrane as a helical segment. Residues 138–154 (RHQLIINPRGWRPNNRH) lie on the Cytoplasmic side of the membrane. The chain crosses the membrane as a helical span at residues 155–175 (AYVGIAVIWVLAVASSLPFLI). Topologically, residues 176–211 (YQVMTDEPFQNVTLDAYKDKYVCFDQFPSDSHRLSY) are extracellular. The chain crosses the membrane as a helical span at residues 212-232 (TTLLLVLQYFGPLCFIFICYF). Residues 233–260 (KIYIRLKRRNNMMDKMRDNKYRSSETKR) are Cytoplasmic-facing. A helical transmembrane segment spans residues 261-281 (INIMLLSIVVAFAVCWLPLTI). Topologically, residues 282–299 (FNTVFDWNHQIIATCNHN) are extracellular. A helical membrane pass occupies residues 300-320 (LLFLLCHLTAMISTCVNPIFY). Topologically, residues 321 to 384 (GFLNKNFQRD…INNNDDNEKI (64 aa)) are cytoplasmic. C338 carries the S-palmitoyl cysteine lipid modification. A Phosphoserine modification is found at S368.

This sequence belongs to the G-protein coupled receptor 1 family.

It is found in the cell membrane. Receptor for neuropeptide Y and peptide YY. The rank order of affinity of this receptor for pancreatic polypeptides is NPY &gt; [Pro-34] PYY, PYY and [Leu-31, Pro-34] NPY &gt; NPY (2-36) &gt; [Ile-31, Gln-34] PP and PYY (3-36) &gt; PP &gt; NPY free acid. The polypeptide is Neuropeptide Y receptor type 1 (NPY1R) (Homo sapiens (Human)).